Here is a 75-residue protein sequence, read N- to C-terminus: Small ribosomal subunit protein eS17 (75 aa).

The protein belongs to the eukaryotic ribosomal protein eS17 family.

The chain is Small ribosomal subunit protein eS17 from Thermoplasma volcanium (strain ATCC 51530 / DSM 4299 / JCM 9571 / NBRC 15438 / GSS1).